Consider the following 192-residue polypeptide: Nucleosome assembly protein 1-like 5 (192 aa).

Residues 1–12 (MADSQNQGSAEP) are compositionally biased toward polar residues. A disordered region spans residues 1 to 76 (MADSQNQGSA…APKPRNDFIE (76 aa)). Low complexity-rich tracts occupy residues 15-28 (AAAA…AAAA) and 40-55 (GDSD…VVGQ). Residues 86 to 112 (VLALKKLQKRCDKIEAKFDKEFQALEK) are a coiled coil. The segment at 136-192 (AWTLEGDEEDDDDDEYEDEEEGEEEDEEEEEPAAEAAGTAAAKDEGPHSAVPDDAKK) is disordered. Acidic residues predominate over residues 140-168 (EGDEEDDDDDEYEDEEEGEEEDEEEEEPA). Residues 177 to 192 (AKDEGPHSAVPDDAKK) show a composition bias toward basic and acidic residues.

This sequence belongs to the nucleosome assembly protein (NAP) family.

It is found in the nucleus. In Bos taurus (Bovine), this protein is Nucleosome assembly protein 1-like 5 (NAP1L5).